The following is a 187-amino-acid chain: uncharacterized protein (187 aa).

Residues 1 to 95 (MTTMKRSADP…GSTRPSARYG (95 aa)) are disordered. A compositionally biased stretch (basic residues) spans 46–80 (RARRSRGPKRFLGKRNYRRARARKPGKRDRAHSSK).

Its subcellular location is the mitochondrion. This is an uncharacterized protein from Arabidopsis thaliana (Mouse-ear cress).